The following is a 262-amino-acid chain: Small ribosomal subunit protein uS2 (262 aa).

Belongs to the universal ribosomal protein uS2 family.

In Borreliella burgdorferi (strain ZS7) (Borrelia burgdorferi), this protein is Small ribosomal subunit protein uS2.